Consider the following 378-residue polypeptide: Probable E3 ubiquitin-protein ligase LUL3 (378 aa).

Residues 1–21 (MGISLSKRRRDNNNNHHHPHH) are compositionally biased toward basic residues. Residues 1-79 (MGISLSKRRR…PPSQISYRPY (79 aa)) form a disordered region. Gly2 is lipidated: N-myristoyl glycine. 2 stretches are compositionally biased toward pro residues: residues 29 to 38 (DPPPQQPPPQ) and 55 to 72 (SLPP…PPPS). The interval 164 to 283 (FVFDALFDGS…GSFKVKVMKQ (120 aa)) is DAR2 domain. The RING-type; atypical zinc-finger motif lies at 321–360 (CVICLTEPKDTAVMPCRHLCLCSDCAEELRFQTNKCPICR).

The protein belongs to the RING-type zinc finger family. LOG2 subfamily. In terms of processing, myristoylated (in vitro).

It catalyses the reaction S-ubiquitinyl-[E2 ubiquitin-conjugating enzyme]-L-cysteine + [acceptor protein]-L-lysine = [E2 ubiquitin-conjugating enzyme]-L-cysteine + N(6)-ubiquitinyl-[acceptor protein]-L-lysine.. It participates in protein modification; protein ubiquitination. Functionally, acts as an E3 ubiquitin-protein ligase, or as part of E3 complex, which accepts ubiquitin from specific E2 ubiquitin-conjugating enzymes and then transfers it to substrates (in vitro). The polypeptide is Probable E3 ubiquitin-protein ligase LUL3 (LUL3) (Arabidopsis thaliana (Mouse-ear cress)).